Consider the following 290-residue polypeptide: Acetyl-coenzyme A carboxylase carboxyl transferase subunit beta (290 aa).

A CoA carboxyltransferase N-terminal domain is found at 28 to 290; it reads IMTKCPKCKK…SRGGDEWHTN (263 aa). 4 residues coordinate Zn(2+): cysteine 32, cysteine 35, cysteine 51, and cysteine 54. Residues 32-54 form a C4-type zinc finger; the sequence is CPKCKKIMYTKELVKNLRVCISC.

The protein belongs to the AccD/PCCB family. Acetyl-CoA carboxylase is a heterohexamer composed of biotin carboxyl carrier protein (AccB), biotin carboxylase (AccC) and two subunits each of ACCase subunit alpha (AccA) and ACCase subunit beta (AccD). Requires Zn(2+) as cofactor.

Its subcellular location is the cytoplasm. The catalysed reaction is N(6)-carboxybiotinyl-L-lysyl-[protein] + acetyl-CoA = N(6)-biotinyl-L-lysyl-[protein] + malonyl-CoA. It participates in lipid metabolism; malonyl-CoA biosynthesis; malonyl-CoA from acetyl-CoA: step 1/1. Component of the acetyl coenzyme A carboxylase (ACC) complex. Biotin carboxylase (BC) catalyzes the carboxylation of biotin on its carrier protein (BCCP) and then the CO(2) group is transferred by the transcarboxylase to acetyl-CoA to form malonyl-CoA. The polypeptide is Acetyl-coenzyme A carboxylase carboxyl transferase subunit beta (Anoxybacillus flavithermus (strain DSM 21510 / WK1)).